Reading from the N-terminus, the 282-residue chain is Large ribosomal subunit protein uL2 (282 aa).

A disordered region spans residues 223–282 (TVRGSVMNPNDHPHGGGEGRAPIGRKSPVTPWGKKALGVKTRNTKKTSEKLIVRKRSNKK).

This sequence belongs to the universal ribosomal protein uL2 family. Part of the 50S ribosomal subunit. Forms a bridge to the 30S subunit in the 70S ribosome.

Its function is as follows. One of the primary rRNA binding proteins. Required for association of the 30S and 50S subunits to form the 70S ribosome, for tRNA binding and peptide bond formation. It has been suggested to have peptidyltransferase activity; this is somewhat controversial. Makes several contacts with the 16S rRNA in the 70S ribosome. This Mycoplasma mycoides subsp. mycoides SC (strain CCUG 32753 / NCTC 10114 / PG1) protein is Large ribosomal subunit protein uL2.